Reading from the N-terminus, the 100-residue chain is Small ribosomal subunit protein uS14c (100 aa).

It belongs to the universal ribosomal protein uS14 family. Part of the 30S ribosomal subunit.

It is found in the plastid. It localises to the chloroplast. In terms of biological role, binds 16S rRNA, required for the assembly of 30S particles. This chain is Small ribosomal subunit protein uS14c, found in Chara vulgaris (Common stonewort).